Here is a 398-residue protein sequence, read N- to C-terminus: 2-epi-5-epi-valiolone synthase (398 aa).

Residues aspartate 62, 93 to 96 (ETVK), 126 to 130 (GVLMD), 150 to 151 (TT), lysine 163, lysine 172, and 190 to 193 (FLAT) contribute to the NAD(+) site. Residue lysine 163 is part of the active site. A divalent metal cation contacts are provided by glutamate 205, histidine 276, and histidine 292.

The protein belongs to the sugar phosphate cyclases superfamily. EEVS family. NAD(+) is required as a cofactor. It depends on Co(2+) as a cofactor.

It carries out the reaction D-sedoheptulose 7-phosphate = 2-epi-5-epi-valiolone + phosphate. Catalyzes the cyclization of D-sedoheptulose 7-phosphate to 2-epi-5-epi-valiolone. Does not use ido-heptulose 7-phosphate and 3-deoxy-arabino-heptulosonate 7-phosphate. Involved in the biosynthesis of the acarviose moiety of the alpha-glucosidase inhibitor acarbose. In Actinoplanes sp. (strain ATCC 31044 / CBS 674.73 / SE50/110), this protein is 2-epi-5-epi-valiolone synthase.